Reading from the N-terminus, the 248-residue chain is ATP synthase subunit a (248 aa).

The next 6 membrane-spanning stretches (helical) occupy residues 25–45 (IAFT…AVMM), 83–103 (FFPL…VGII), 113–133 (LIVT…YGLA), 142–162 (LFVP…IEVI), 192–212 (FIAM…LPLG), and 215–235 (IALT…FAIL).

The protein belongs to the ATPase A chain family. In terms of assembly, F-type ATPases have 2 components, CF(1) - the catalytic core - and CF(0) - the membrane proton channel. CF(1) has five subunits: alpha(3), beta(3), gamma(1), delta(1), epsilon(1). CF(0) has four main subunits: a, b, b' and c.

It is found in the cell inner membrane. In terms of biological role, key component of the proton channel; it plays a direct role in the translocation of protons across the membrane. In Rhodopseudomonas palustris (strain HaA2), this protein is ATP synthase subunit a.